The following is a 399-amino-acid chain: Elongation factor Tu (399 aa).

The tr-type G domain maps to 10–204; it reads KPHVNIGTIG…AVDASIPEPE (195 aa). The G1 stretch occupies residues 19–26; sequence GHVDHGKT. GTP is bound at residue 19 to 26; the sequence is GHVDHGKT. T26 serves as a coordination point for Mg(2+). The interval 60–64 is G2; that stretch reads GITIN. Positions 81–84 are G3; that stretch reads DCPG. Residues 81 to 85 and 136 to 139 contribute to the GTP site; these read DCPGH and NKCD. The segment at 136-139 is G4; that stretch reads NKCD. The G5 stretch occupies residues 174–176; that stretch reads SGL.

The protein belongs to the TRAFAC class translation factor GTPase superfamily. Classic translation factor GTPase family. EF-Tu/EF-1A subfamily. In terms of assembly, monomer.

It localises to the cytoplasm. It catalyses the reaction GTP + H2O = GDP + phosphate + H(+). Functionally, GTP hydrolase that promotes the GTP-dependent binding of aminoacyl-tRNA to the A-site of ribosomes during protein biosynthesis. The protein is Elongation factor Tu of Prochlorococcus marinus (strain MIT 9313).